Reading from the N-terminus, the 329-residue chain is Calcium homeostasis modulator protein (329 aa).

Residues Met-1–Asn-14 are Cytoplasmic-facing. A helical transmembrane segment spans residues Val-15–Gly-35. Over Gln-36–Asn-53 the chain is Extracellular. A helical membrane pass occupies residues Ile-54–Thr-74. Residues Val-75–Ser-103 lie on the Cytoplasmic side of the membrane. A helical transmembrane segment spans residues Trp-104 to Leu-124. Residues Asp-125–Gln-191 lie on the Extracellular side of the membrane. An N-linked (GlcNAc...) asparagine glycan is attached at Asn-148. The helical transmembrane segment at Ile-192–Asn-212 threads the bilayer. At Arg-213–Asp-329 the chain is on the cytoplasmic side.

This sequence belongs to the CALHM family. In terms of tissue distribution, expressed in head and body wall muscles, IL2, ASG, ASI, ASJ, PHA and PHB sensory neurons, and spermatheca.

The protein resides in the cell membrane. Pore-forming subunit of a voltage-gated ion channel. Permeable to monovalent cations, divalent cations and anions with selectivity Ca(2+) &gt; Mg(2+) &gt; Na(+) = K(+) &gt; Cl(-). Acts both as a voltage-gated and calcium-activated ion channel. Required for normal locomotion. The polypeptide is Calcium homeostasis modulator protein (Caenorhabditis elegans).